Reading from the N-terminus, the 320-residue chain is ATP-dependent 6-phosphofructokinase (320 aa).

Residues Gly12, 73 to 74 (RF), and 103 to 106 (GDGS) contribute to the ATP site. Asp104 lines the Mg(2+) pocket. 126 to 128 (TID) contributes to the substrate binding site. Asp128 acts as the Proton acceptor in catalysis. Arg155 serves as a coordination point for ADP. Residues Arg163 and 170-172 (MGR) contribute to the substrate site. Residues 186–188 (GCE) and Lys212 each bind ADP. Residues Glu223, Arg244, and 250 to 253 (HIQR) each bind substrate.

This sequence belongs to the phosphofructokinase type A (PFKA) family. ATP-dependent PFK group I subfamily. Prokaryotic clade 'B1' sub-subfamily. In terms of assembly, homotetramer. Requires Mg(2+) as cofactor.

It localises to the cytoplasm. The catalysed reaction is beta-D-fructose 6-phosphate + ATP = beta-D-fructose 1,6-bisphosphate + ADP + H(+). It functions in the pathway carbohydrate degradation; glycolysis; D-glyceraldehyde 3-phosphate and glycerone phosphate from D-glucose: step 3/4. Allosterically activated by ADP and other diphosphonucleosides, and allosterically inhibited by phosphoenolpyruvate. In terms of biological role, catalyzes the phosphorylation of D-fructose 6-phosphate to fructose 1,6-bisphosphate by ATP, the first committing step of glycolysis. In Buchnera aphidicola subsp. Cinara cedri (strain Cc), this protein is ATP-dependent 6-phosphofructokinase.